The primary structure comprises 133 residues: UPF0225 protein BP2036 (133 aa).

Belongs to the UPF0225 family.

The chain is UPF0225 protein BP2036 from Bordetella pertussis (strain Tohama I / ATCC BAA-589 / NCTC 13251).